The primary structure comprises 675 residues: Putative acyl-coenzyme A oxidase 3.2, peroxisomal (675 aa).

The transit peptide at 1-34 (MSENVELRRAHILANHILRSPRPSSNPSLTPEVC) directs the protein to the peroxisome. Residue 442–457 (AVGGQGLKTENRVGHL) coordinates FAD.

The protein belongs to the acyl-CoA oxidase family. FAD serves as cofactor.

It localises to the peroxisome. It carries out the reaction a 2,3-saturated acyl-CoA + O2 = a (2E)-enoyl-CoA + H2O2. Functionally, catalyzes the desaturation of acyl-CoAs to 2-trans-enoyl-CoAs. The polypeptide is Putative acyl-coenzyme A oxidase 3.2, peroxisomal (ACX3.2) (Arabidopsis thaliana (Mouse-ear cress)).